A 412-amino-acid polypeptide reads, in one-letter code: uncharacterized protein (412 aa).

Residues cysteine 62, cysteine 68, cysteine 71, and cysteine 143 each coordinate [4Fe-4S] cluster. S-adenosyl-L-methionine is bound by residues glutamine 243, phenylalanine 270, glutamate 290, and aspartate 338. Catalysis depends on cysteine 364, which acts as the Nucleophile.

Belongs to the class I-like SAM-binding methyltransferase superfamily. RNA M5U methyltransferase family.

This is an uncharacterized protein from Mesorhizobium japonicum (strain LMG 29417 / CECT 9101 / MAFF 303099) (Mesorhizobium loti (strain MAFF 303099)).